A 146-amino-acid chain; its full sequence is D-aminoacyl-tRNA deacylase (146 aa).

Positions 137–138 (GP) match the Gly-cisPro motif, important for rejection of L-amino acids motif.

It belongs to the DTD family. In terms of assembly, homodimer.

The protein resides in the cytoplasm. The catalysed reaction is glycyl-tRNA(Ala) + H2O = tRNA(Ala) + glycine + H(+). The enzyme catalyses a D-aminoacyl-tRNA + H2O = a tRNA + a D-alpha-amino acid + H(+). Its function is as follows. An aminoacyl-tRNA editing enzyme that deacylates mischarged D-aminoacyl-tRNAs. Also deacylates mischarged glycyl-tRNA(Ala), protecting cells against glycine mischarging by AlaRS. Acts via tRNA-based rather than protein-based catalysis; rejects L-amino acids rather than detecting D-amino acids in the active site. By recycling D-aminoacyl-tRNA to D-amino acids and free tRNA molecules, this enzyme counteracts the toxicity associated with the formation of D-aminoacyl-tRNA entities in vivo and helps enforce protein L-homochirality. The protein is D-aminoacyl-tRNA deacylase of Psychrobacter sp. (strain PRwf-1).